Reading from the N-terminus, the 176-residue chain is Ribosome rescue factor SmrB (176 aa).

A Smr domain is found at 98–173; that stretch reads LDLHGLTQKQ…GTAALLLLIE (76 aa).

It belongs to the SmrB family. As to quaternary structure, associates with collided ribosomes, but not with correctly translating polysomes.

Functionally, acts as a ribosome collision sensor. Detects stalled/collided disomes (pairs of ribosomes where the leading ribosome is stalled and a second ribosome has collided with it) and endonucleolytically cleaves mRNA at the 5' boundary of the stalled ribosome. Stalled/collided disomes form a new interface (primarily via the 30S subunits) that binds SmrB. Cleaved mRNA becomes available for tmRNA ligation, leading to ribosomal subunit dissociation and rescue of stalled ribosomes. In Yersinia pseudotuberculosis serotype O:1b (strain IP 31758), this protein is Ribosome rescue factor SmrB.